We begin with the raw amino-acid sequence, 407 residues long: Na(+)-translocating NADH-quinone reductase subunit F (407 aa).

The helical transmembrane segment at 3-23 (IILGVVMFTLIVLALTVMILF) threads the bilayer. The 2Fe-2S ferredoxin-type domain maps to 32-126 (GDITIDINED…NLKIELPEEI (95 aa)). Residues Cys69, Cys75, Cys78, and Cys110 each coordinate [2Fe-2S] cluster. Residues 129-269 (VKKWECEVIS…SGPFGEFFAK (141 aa)) form the FAD-binding FR-type domain.

The protein belongs to the NqrF family. As to quaternary structure, composed of six subunits; NqrA, NqrB, NqrC, NqrD, NqrE and NqrF. [2Fe-2S] cluster is required as a cofactor. FAD serves as cofactor.

The protein resides in the cell inner membrane. It carries out the reaction a ubiquinone + n Na(+)(in) + NADH + H(+) = a ubiquinol + n Na(+)(out) + NAD(+). NQR complex catalyzes the reduction of ubiquinone-1 to ubiquinol by two successive reactions, coupled with the transport of Na(+) ions from the cytoplasm to the periplasm. The first step is catalyzed by NqrF, which accepts electrons from NADH and reduces ubiquinone-1 to ubisemiquinone by a one-electron transfer pathway. This Yersinia enterocolitica serotype O:8 / biotype 1B (strain NCTC 13174 / 8081) protein is Na(+)-translocating NADH-quinone reductase subunit F.